A 314-amino-acid polypeptide reads, in one-letter code: Olfactory receptor 5P76 (314 aa).

The Extracellular segment spans residues 1 to 28 (MAFLEDGNHTAVTGFILLGLTDDPVLRV). The N-linked (GlcNAc...) asparagine glycan is linked to Asn-8. Residues 29–49 (VLFVIILCIYLVTVSGNLSTI) traverse the membrane as a helical segment. Residues 50 to 57 (LLIRVSSQ) are Cytoplasmic-facing. Residues 58 to 78 (LHHPMYFFLSHLASADIGYSS) form a helical membrane-spanning segment. Residues 79 to 102 (SVTPNMLVNFLVERNTISYLGCGI) are Extracellular-facing. A disulfide bridge connects residues Cys-100 and Cys-192. Residues 103–123 (QLGSAVFFGTVECFLLAAMAY) traverse the membrane as a helical segment. At 124-136 (DRFIAICSPLLYS) the chain is on the cytoplasmic side. The helical transmembrane segment at 137 to 157 (NKMSTQVCVQLLVGSYIGGFL) threads the bilayer. Residues 158–199 (NASSFTLSFFSLVFCGPNRVNHFFCDFAPLVKLSCSDVSVPA) are Extracellular-facing. The chain crosses the membrane as a helical span at residues 200–220 (VVPSFTAGSIIIVTIFVIAVS). The Cytoplasmic portion of the chain corresponds to 221–240 (YIYILITILKMRSTEGRQKA). A helical transmembrane segment spans residues 241-261 (FSTCTSHLTAVTLFYGTITFI). Residues 262–274 (YVMPKSSYSTDQN) lie on the Extracellular side of the membrane. The chain crosses the membrane as a helical span at residues 275–295 (KVVSVFYMVVVPMLNPLIYSL). Topologically, residues 296 to 314 (RNKEIKGALKRQLAKNTFS) are cytoplasmic.

The protein belongs to the G-protein coupled receptor 1 family.

Its subcellular location is the cell membrane. Functionally, potential odorant receptor. This is Olfactory receptor 5P76 from Mus musculus (Mouse).